We begin with the raw amino-acid sequence, 199 residues long: Recombination protein RecR (199 aa).

The C4-type zinc finger occupies 57–72 (CQSCRTFTEETYCPIC). Residues 81–176 (SVICVVETPA…AVSRIAHGVP (96 aa)) form the Toprim domain.

The protein belongs to the RecR family.

Its function is as follows. May play a role in DNA repair. It seems to be involved in an RecBC-independent recombinational process of DNA repair. It may act with RecF and RecO. This chain is Recombination protein RecR, found in Shewanella piezotolerans (strain WP3 / JCM 13877).